The chain runs to 918 residues: Translation initiation factor IF-2 (918 aa).

The segment at 39–321 is disordered; it reads DDASEKHLRN…KRDGRMKETT (283 aa). Residues 95–146 show a composition bias toward low complexity; it reads KSSNNESTTRNNNNNKNGNQNRNNTNGRPNNNQNRPNNNRNQNNNRNGNRPN. The segment covering 148–158 has biased composition (basic and acidic residues); it reads PKRDEKQDRIR. The segment covering 159 to 174 has biased composition (low complexity); it reads ASVAEAARMAAQANRE. Residues 180–190 are compositionally biased toward polar residues; it reads PQANRQRTNSA. Composition is skewed to low complexity over residues 201–231, 237–267, and 278–296; these read NNQNRPNNNNRNGNNVNRTNNNNRPNNNNRN, SRPNNTNQTTNNRPANNTTRPAAPAATTANN, and GRNNNSRGGNRFGNNQNRP. The segment covering 302-313 has biased composition (basic residues); the sequence is RKNKKRNRKAKR. Positions 419 to 588 constitute a tr-type G domain; it reads SRPPVVTIMG…LLQAEVLELK (170 aa). Positions 428 to 435 are G1; sequence GHVDHGKT. 428 to 435 contributes to the GTP binding site; that stretch reads GHVDHGKT. The tract at residues 453–457 is G2; sequence GITQG. Positions 474–477 are G3; it reads DTPG. Residues 474–478 and 528–531 each bind GTP; these read DTPGH and NKID. Residues 528–531 are G4; the sequence is NKID. The interval 564–566 is G5; that stretch reads SAK.

It belongs to the TRAFAC class translation factor GTPase superfamily. Classic translation factor GTPase family. IF-2 subfamily.

It localises to the cytoplasm. One of the essential components for the initiation of protein synthesis. Protects formylmethionyl-tRNA from spontaneous hydrolysis and promotes its binding to the 30S ribosomal subunits. Also involved in the hydrolysis of GTP during the formation of the 70S ribosomal complex. This Pediococcus pentosaceus (strain ATCC 25745 / CCUG 21536 / LMG 10740 / 183-1w) protein is Translation initiation factor IF-2.